Consider the following 84-residue polypeptide: Small ribosomal subunit protein uS17 (84 aa).

The protein belongs to the universal ribosomal protein uS17 family. Part of the 30S ribosomal subunit.

One of the primary rRNA binding proteins, it binds specifically to the 5'-end of 16S ribosomal RNA. This is Small ribosomal subunit protein uS17 from Glaesserella parasuis serovar 5 (strain SH0165) (Haemophilus parasuis).